The sequence spans 185 residues: Ribosome-recycling factor (185 aa).

Belongs to the RRF family.

Its subcellular location is the cytoplasm. Responsible for the release of ribosomes from messenger RNA at the termination of protein biosynthesis. May increase the efficiency of translation by recycling ribosomes from one round of translation to another. The sequence is that of Ribosome-recycling factor from Bacillus cereus (strain B4264).